Consider the following 353-residue polypeptide: Ferredoxin--NADP reductase 1 (353 aa).

The FAD site is built by T14, D33, Q41, Y46, A86, F121, D289, and T330.

This sequence belongs to the ferredoxin--NADP reductase type 2 family. As to quaternary structure, homodimer. FAD is required as a cofactor.

The enzyme catalyses 2 reduced [2Fe-2S]-[ferredoxin] + NADP(+) + H(+) = 2 oxidized [2Fe-2S]-[ferredoxin] + NADPH. In Christiangramia forsetii (strain DSM 17595 / CGMCC 1.15422 / KT0803) (Gramella forsetii), this protein is Ferredoxin--NADP reductase 1.